A 104-amino-acid polypeptide reads, in one-letter code: MIRKAFLMSVKPEAHAEYKRRHDEIWPELADTLKKHGAHNYNIFLNPETSQLFAYVEIESEERWNAVADTEICKEWWAYMKDIMPSNPDNSPVSLELTSVFYLA.

A substrate-binding site is contributed by Tyr18. His22 acts as the Proton donor in catalysis. Residues Tyr41 and 76–77 each bind substrate; that span reads WW.

The protein belongs to the rhamnose mutarotase family. As to quaternary structure, homodimer.

It localises to the cytoplasm. It catalyses the reaction alpha-L-rhamnose = beta-L-rhamnose. The protein operates within carbohydrate metabolism; L-rhamnose metabolism. Its function is as follows. Involved in the anomeric conversion of L-rhamnose. The chain is L-rhamnose mutarotase from Tolumonas auensis (strain DSM 9187 / NBRC 110442 / TA 4).